We begin with the raw amino-acid sequence, 434 residues long: Forkhead box protein A2-A (434 aa).

A DNA-binding region (fork-head) is located at residues 149-243 (KPPYSYISLI…ENGCYLRRQK (95 aa)). Residues 249-262 (KKPSLREGGGKKLS) show a composition bias toward basic and acidic residues. Disordered regions lie at residues 249–339 (KKPS…QSHL) and 408–434 (SGLE…MNSS). Composition is skewed to low complexity over residues 263–291 (EGAS…SSSP) and 317–333 (ASQA…VLSH). The segment covering 408–422 (SGLESSPITSDTSYY) has biased composition (polar residues).

As to expression, at gastrula stage, expressed in both the anterior and posterior endoderm, with endodermal expression persisting into early tailbud stages. Expression is absent in gastrula stage ectoderm. During tailbud stages, expressed in the pharyngeal region, the neural floor plate, the midbrain, hindbrain and in cranial neural crest cells. Expressed in the foregut of hatching larvae. In tadpoles, expressed in the pharyngeal pouches and in other anterior endodermal regions. Within the tadpole nervous system, expressed in the neural floor plate, at high levels in the ventral midbrain and hindbrain, and at lower levels in the spinal cord. Expressed in the adult lung and brain.

It is found in the nucleus. Its function is as follows. Acts as a transcriptional activator during early development, limiting the extent of mesoderm formation in the gastrula. Binds to DNA via the target sequence 5'-GT[AC]AACA-3', with 5'-GTAAACA-3' being the preferred binding site. In Xenopus laevis (African clawed frog), this protein is Forkhead box protein A2-A (foxa2-a).